Here is a 121-residue protein sequence, read N- to C-terminus: MARIAGVDLPRNKRVAIGLTYIYGIGHSKAEEIVEQTGVSTDTRVKDLTEDEVNRLRSTIDNDYTVEGDLRREISMNIKRLMEIGCYRGLRHRRGLPVRGQSTKNNARTRKGPKRTVGAKR.

Residues 94–121 (RGLPVRGQSTKNNARTRKGPKRTVGAKR) form a disordered region. The span at 107 to 121 (ARTRKGPKRTVGAKR) shows a compositional bias: basic residues.

The protein belongs to the universal ribosomal protein uS13 family. As to quaternary structure, part of the 30S ribosomal subunit. Forms a loose heterodimer with protein S19. Forms two bridges to the 50S subunit in the 70S ribosome.

Its function is as follows. Located at the top of the head of the 30S subunit, it contacts several helices of the 16S rRNA. In the 70S ribosome it contacts the 23S rRNA (bridge B1a) and protein L5 of the 50S subunit (bridge B1b), connecting the 2 subunits; these bridges are implicated in subunit movement. Contacts the tRNAs in the A and P-sites. This is Small ribosomal subunit protein uS13 from Natranaerobius thermophilus (strain ATCC BAA-1301 / DSM 18059 / JW/NM-WN-LF).